The following is a 164-amino-acid chain: uncharacterized protein (164 aa).

An N-terminal signal peptide occupies residues 1–25 (MMKTVKHLLCCAIAASALISTGVHA).

This is an uncharacterized protein from Escherichia coli (strain K12).